Reading from the N-terminus, the 156-residue chain is Small ribosomal subunit protein uS7 (156 aa).

This sequence belongs to the universal ribosomal protein uS7 family. As to quaternary structure, part of the 30S ribosomal subunit. Contacts proteins S9 and S11.

Its function is as follows. One of the primary rRNA binding proteins, it binds directly to 16S rRNA where it nucleates assembly of the head domain of the 30S subunit. Is located at the subunit interface close to the decoding center, probably blocks exit of the E-site tRNA. This is Small ribosomal subunit protein uS7 from Bacillus mycoides (strain KBAB4) (Bacillus weihenstephanensis).